A 178-amino-acid chain; its full sequence is Large ribosomal subunit protein uL6 (178 aa).

It belongs to the universal ribosomal protein uL6 family. Part of the 50S ribosomal subunit.

In terms of biological role, this protein binds to the 23S rRNA, and is important in its secondary structure. It is located near the subunit interface in the base of the L7/L12 stalk, and near the tRNA binding site of the peptidyltransferase center. This Leifsonia xyli subsp. xyli (strain CTCB07) protein is Large ribosomal subunit protein uL6.